The following is a 159-amino-acid chain: Dihydrofolate reductase (159 aa).

One can recognise a DHFR domain in the interval methionine 1 to arginine 158. Isoleucine 5 lines the substrate pocket. NADP(+) contacts are provided by residues alanine 7 and valine 13–alanine 19. Residue aspartate 27 participates in substrate binding. Position 45–46 (histidine 45–threonine 46) interacts with NADP(+). Substrate-binding residues include arginine 52 and arginine 57. Residues serine 63–serine 64, lysine 76, and glycine 95–glutamine 102 contribute to the NADP(+) site. Threonine 113 serves as a coordination point for substrate.

It belongs to the dihydrofolate reductase family.

It catalyses the reaction (6S)-5,6,7,8-tetrahydrofolate + NADP(+) = 7,8-dihydrofolate + NADPH + H(+). It participates in cofactor biosynthesis; tetrahydrofolate biosynthesis; 5,6,7,8-tetrahydrofolate from 7,8-dihydrofolate: step 1/1. Functionally, key enzyme in folate metabolism. Catalyzes an essential reaction for de novo glycine and purine synthesis, and for DNA precursor synthesis. This Escherichia coli O6:H1 (strain CFT073 / ATCC 700928 / UPEC) protein is Dihydrofolate reductase (folA).